Consider the following 107-residue polypeptide: MMKVLVVVALLVTLISYSSSEGIDDLEADELLSLMANEQTRKECIPKHHECTSNKHGCCRGNFFKYKCQCTTVVTQDGEQTERCFCGTPPHHMAAELVVGFGKKIFG.

An N-terminal signal peptide occupies residues 1 to 20 (MMKVLVVVALLVTLISYSSS). Positions 21–41 (EGIDDLEADELLSLMANEQTR) are excised as a propeptide. 4 disulfides stabilise this stretch: Cys-44-Cys-59, Cys-51-Cys-68, Cys-58-Cys-86, and Cys-70-Cys-84.

It belongs to the neurotoxin 19 (CSTX) family. 04 (U1-Lctx) subfamily. In terms of tissue distribution, expressed by the venom gland.

The protein localises to the secreted. In Lycosa singoriensis (Wolf spider), this protein is U1-lycotoxin-Ls1q.